A 247-amino-acid chain; its full sequence is 3-deoxy-manno-octulosonate cytidylyltransferase (247 aa).

It belongs to the KdsB family.

It localises to the cytoplasm. The enzyme catalyses 3-deoxy-alpha-D-manno-oct-2-ulosonate + CTP = CMP-3-deoxy-beta-D-manno-octulosonate + diphosphate. It participates in nucleotide-sugar biosynthesis; CMP-3-deoxy-D-manno-octulosonate biosynthesis; CMP-3-deoxy-D-manno-octulosonate from 3-deoxy-D-manno-octulosonate and CTP: step 1/1. Its pathway is bacterial outer membrane biogenesis; lipopolysaccharide biosynthesis. In terms of biological role, activates KDO (a required 8-carbon sugar) for incorporation into bacterial lipopolysaccharide in Gram-negative bacteria. The sequence is that of 3-deoxy-manno-octulosonate cytidylyltransferase from Bdellovibrio bacteriovorus (strain ATCC 15356 / DSM 50701 / NCIMB 9529 / HD100).